Reading from the N-terminus, the 276-residue chain is Large ribosomal subunit protein uL2 (276 aa).

2 disordered regions span residues 1–61 (MALK…HKQK) and 224–276 (AMNP…KKKN). Positions 15 to 31 (GRIDLRKDEITAQKPEK) are enriched in basic and acidic residues.

This sequence belongs to the universal ribosomal protein uL2 family. As to quaternary structure, part of the 50S ribosomal subunit. Forms a bridge to the 30S subunit in the 70S ribosome.

One of the primary rRNA binding proteins. Required for association of the 30S and 50S subunits to form the 70S ribosome, for tRNA binding and peptide bond formation. It has been suggested to have peptidyltransferase activity; this is somewhat controversial. Makes several contacts with the 16S rRNA in the 70S ribosome. The chain is Large ribosomal subunit protein uL2 from Treponema denticola (strain ATCC 35405 / DSM 14222 / CIP 103919 / JCM 8153 / KCTC 15104).